Consider the following 146-residue polypeptide: Hemoglobin subunit beta (146 aa).

In terms of domain architecture, Globin spans 2 to 146 (FLTPEENGHV…VANALAHKYH (145 aa)). Thr12 bears the Phosphothreonine mark. Ser44 carries the post-translational modification Phosphoserine. An N6-acetyllysine modification is found at Lys59. His63 serves as a coordination point for heme b. Residue Lys82 is modified to N6-acetyllysine. Residue His92 participates in heme b binding. Cys93 bears the S-nitrosocysteine mark. N6-acetyllysine is present on Lys144.

This sequence belongs to the globin family. Heterotetramer of two alpha chains and two beta chains. As to expression, red blood cells.

Functionally, involved in oxygen transport from the lung to the various peripheral tissues. This chain is Hemoglobin subunit beta (HBB), found in Hapalemur griseus (Gray gentle lemur).